The primary structure comprises 110 residues: U1-lycotoxin-Ls1ii (110 aa).

The N-terminal stretch at 1–20 (MKFVLLFGVLLVTLFSYSSA) is a signal peptide. The propeptide occupies 21–44 (EMLDDFDQADEDELLSLIEKEEAR). Cystine bridges form between cysteine 47-cysteine 62, cysteine 54-cysteine 71, cysteine 61-cysteine 89, and cysteine 73-cysteine 87.

The protein belongs to the neurotoxin 19 (CSTX) family. 03 subfamily. Expressed by the venom gland.

The protein localises to the secreted. The chain is U1-lycotoxin-Ls1ii from Lycosa singoriensis (Wolf spider).